The following is an 87-amino-acid chain: Cell division topological specificity factor (87 aa).

This sequence belongs to the MinE family.

In terms of biological role, prevents the cell division inhibition by proteins MinC and MinD at internal division sites while permitting inhibition at polar sites. This ensures cell division at the proper site by restricting the formation of a division septum at the midpoint of the long axis of the cell. This chain is Cell division topological specificity factor, found in Leptothrix cholodnii (strain ATCC 51168 / LMG 8142 / SP-6) (Leptothrix discophora (strain SP-6)).